A 486-amino-acid chain; its full sequence is Vacuolar protein sorting-associated protein 73 (486 aa).

Residues methionine 1–lysine 26 lie on the Cytoplasmic side of the membrane. A helical transmembrane segment spans residues alanine 27–serine 47. The Mitochondrial intermembrane segment spans residues glutamate 48 to glutamine 90. The chain crosses the membrane as a helical span at residues isoleucine 91–serine 111. Topologically, residues leucine 112–lysine 119 are cytoplasmic. Residues phenylalanine 120–asparagine 140 traverse the membrane as a helical segment. Residues serine 141–isoleucine 146 are Mitochondrial intermembrane-facing. Residues isoleucine 147–isoleucine 167 form a helical membrane-spanning segment. Residues lysine 168–leucine 178 lie on the Cytoplasmic side of the membrane. The chain crosses the membrane as a helical span at residues leucine 179–leucine 199. Residues proline 200–arginine 208 are Mitochondrial intermembrane-facing. A helical transmembrane segment spans residues tryptophan 209 to aspartate 229. The Cytoplasmic portion of the chain corresponds to glutamate 230–histidine 305. The helical transmembrane segment at valine 306–glycine 326 threads the bilayer. Residues threonine 327–asparagine 342 are Mitochondrial intermembrane-facing. The chain crosses the membrane as a helical span at residues phenylalanine 343–leucine 363. The Cytoplasmic portion of the chain corresponds to proline 364–lysine 366. A helical membrane pass occupies residues proline 367–methionine 387. The Mitochondrial intermembrane portion of the chain corresponds to asparagine 388 to isoleucine 396. Residues valine 397–isoleucine 417 form a helical membrane-spanning segment. At methionine 418–arginine 432 the chain is on the cytoplasmic side. The helical transmembrane segment at tyrosine 433–histidine 453 threads the bilayer. Residue aspartate 454 is a topological domain, mitochondrial intermembrane. A helical membrane pass occupies residues valine 455–isoleucine 475. The Cytoplasmic segment spans residues tryptophan 476–glycine 486.

The protein belongs to the major facilitator superfamily. Sugar transporter (TC 2.A.1.1) family.

It is found in the mitochondrion membrane. Its function is as follows. May be involved in vacuolar protein sorting. The protein is Vacuolar protein sorting-associated protein 73 (VPS73) of Saccharomyces cerevisiae (strain ATCC 204508 / S288c) (Baker's yeast).